We begin with the raw amino-acid sequence, 268 residues long: NAC transcription factor 29 (268 aa).

Residues 9–161 (LPPGFRFHPT…EWVLCRIYKK (153 aa)) enclose the NAC domain. Residues 106-167 (VGVKKALVFY…IYKKRGASKL (62 aa)) mediate DNA binding.

In terms of tissue distribution, expressed in senescing leaves, petals and sepals.

The protein resides in the nucleus. Transcription activator that binds to, and transactivates the promoter of the abscisic aldehyde oxidase AAO3. Promotes chlorophyll degradation in leaves by enhancing transcription of AAO3, which leads to increased levels of the senescence-inducing hormone abscisic acid (ABA). Involved in the control of dehydration in senescing leaves. Binds to the DNA sequence 5'-CACGTAAGT-3' of SAG113 promoter. SAG113 acts as a negative regulator of ABA signaling for stomatal closure in leaves, and controls water loss during leaf senescence. Transcription factor of the NAC family involved in senescence. May function in the transition between active cell division and cell expansion. Required for normal seed development and morphology. The chain is NAC transcription factor 29 (NAC029) from Arabidopsis thaliana (Mouse-ear cress).